A 406-amino-acid polypeptide reads, in one-letter code: Probable endo-xylogalacturonan hydrolase A (406 aa).

The first 18 residues, 1–18 (MLYYRNLALLSLLSLSSA), serve as a signal peptide directing secretion. PbH1 repeat units lie at residues 183–213 (AKDVTFTNLRMDATSRSDNPPKNTDGFDIGS), 214–235 (STHVTISSVSVSNDDDCVALKP), 237–257 (CNYVTVENVTCTGSHGISVGS), and 299–320 (VKNVTFSDFNVRGCDYAFQIQS). Asp228 functions as the Proton donor in the catalytic mechanism. Residue Asn244 is glycosylated (N-linked (GlcNAc...) asparagine). His251 is a catalytic residue. The N-linked (GlcNAc...) asparagine glycan is linked to Asn301.

It belongs to the glycosyl hydrolase 28 family.

The protein resides in the secreted. Functionally, pectinolytic enzyme involved in the degradation of xylogalacturonan (xga), a galacturonan backbone heavily substituted with xylose, and which is one important component of the hairy regions of pectin. Activity requires a galacturonic acid backbone substituted with xylose. This is Probable endo-xylogalacturonan hydrolase A (xghA) from Neosartorya fischeri (strain ATCC 1020 / DSM 3700 / CBS 544.65 / FGSC A1164 / JCM 1740 / NRRL 181 / WB 181) (Aspergillus fischerianus).